The following is a 1027-amino-acid chain: A-factor-processing enzyme (1027 aa).

A Zn(2+)-binding site is contributed by H118. The Proton acceptor role is filled by E121. H122 and E199 together coordinate Zn(2+).

This sequence belongs to the peptidase M16 family. The cofactor is Zn(2+).

It localises to the membrane. Inhibited by chelating agents like EDTA, TPEN and 1,1-phenanthroline, as well as NEM, free cysteine and DTT. Involved in the N-terminal endoproteolytic cleavage of the P2 precursor of the a-factor mating pheromone. Capable of proteolysing the established mammalian insulin-degrading enzymes (IDEs) substrates amyloid-beta peptide and insulin B-chain. This is A-factor-processing enzyme (STE23) from Saccharomyces cerevisiae (strain ATCC 204508 / S288c) (Baker's yeast).